Consider the following 257-residue polypeptide: Putative hydro-lyase Bamb_5282 (257 aa).

The protein belongs to the D-glutamate cyclase family.

This Burkholderia ambifaria (strain ATCC BAA-244 / DSM 16087 / CCUG 44356 / LMG 19182 / AMMD) (Burkholderia cepacia (strain AMMD)) protein is Putative hydro-lyase Bamb_5282.